A 308-amino-acid polypeptide reads, in one-letter code: Oxygen-dependent coproporphyrinogen-III oxidase (308 aa).

Position 100 (Ser-100) interacts with substrate. Residues His-104 and His-114 each contribute to the a divalent metal cation site. Residue His-114 is the Proton donor of the active site. 116-118 (NFR) contributes to the substrate binding site. His-153 and His-183 together coordinate a divalent metal cation. The tract at residues 248–283 (YVEFNLVFDRGTIFGLQSGGRTESILSSMPPIATWK) is important for dimerization. Substrate is bound at residue 266–268 (GGR).

The protein belongs to the aerobic coproporphyrinogen-III oxidase family. As to quaternary structure, homodimer. Requires a divalent metal cation as cofactor.

It localises to the cytoplasm. It catalyses the reaction coproporphyrinogen III + O2 + 2 H(+) = protoporphyrinogen IX + 2 CO2 + 2 H2O. The protein operates within porphyrin-containing compound metabolism; protoporphyrin-IX biosynthesis; protoporphyrinogen-IX from coproporphyrinogen-III (O2 route): step 1/1. In terms of biological role, involved in the heme biosynthesis. Catalyzes the aerobic oxidative decarboxylation of propionate groups of rings A and B of coproporphyrinogen-III to yield the vinyl groups in protoporphyrinogen-IX. The protein is Oxygen-dependent coproporphyrinogen-III oxidase of Francisella tularensis subsp. tularensis (strain FSC 198).